A 538-amino-acid polypeptide reads, in one-letter code: CTP synthase (538 aa).

Residues 1-266 (MKTKFIFVTG…DDQVVDKLNI (266 aa)) form an amidoligase domain region. Ser-14 contributes to the CTP binding site. A UTP-binding site is contributed by Ser-14. ATP contacts are provided by residues 15 to 20 (SIGKGL) and Asp-72. Residues Asp-72 and Glu-140 each contribute to the Mg(2+) site. CTP is bound by residues 147 to 149 (DIE), 187 to 192 (KTKPTQ), and Lys-223. Residues 187 to 192 (KTKPTQ) and Lys-223 each bind UTP. The Glutamine amidotransferase type-1 domain maps to 292–534 (HIAIVGKYVN…IAAALEHRGK (243 aa)). Position 354 (Gly-354) interacts with L-glutamine. Cys-381 acts as the Nucleophile; for glutamine hydrolysis in catalysis. Residues 382 to 385 (LGMQ), Glu-405, and Arg-462 each bind L-glutamine. Catalysis depends on residues His-507 and Glu-509.

Belongs to the CTP synthase family. As to quaternary structure, homotetramer.

It catalyses the reaction UTP + L-glutamine + ATP + H2O = CTP + L-glutamate + ADP + phosphate + 2 H(+). The catalysed reaction is L-glutamine + H2O = L-glutamate + NH4(+). It carries out the reaction UTP + NH4(+) + ATP = CTP + ADP + phosphate + 2 H(+). Its pathway is pyrimidine metabolism; CTP biosynthesis via de novo pathway; CTP from UDP: step 2/2. Its activity is regulated as follows. Allosterically activated by GTP, when glutamine is the substrate; GTP has no effect on the reaction when ammonia is the substrate. The allosteric effector GTP functions by stabilizing the protein conformation that binds the tetrahedral intermediate(s) formed during glutamine hydrolysis. Inhibited by the product CTP, via allosteric rather than competitive inhibition. Catalyzes the ATP-dependent amination of UTP to CTP with either L-glutamine or ammonia as the source of nitrogen. Regulates intracellular CTP levels through interactions with the four ribonucleotide triphosphates. In Geobacter metallireducens (strain ATCC 53774 / DSM 7210 / GS-15), this protein is CTP synthase.